The following is a 407-amino-acid chain: Na(+)-translocating NADH-quinone reductase subunit F (407 aa).

The helical transmembrane segment at 6–26 threads the bilayer; the sequence is IFLAIGMFTAIVLGLVAIILV. The 93-residue stretch at 35–127 folds into the 2Fe-2S ferredoxin-type domain; it reads GDVTIQINGE…DMQIRVPEEV (93 aa). Residues cysteine 70, cysteine 76, cysteine 79, and cysteine 111 each contribute to the [2Fe-2S] cluster site. Residues 130-269 form the FAD-binding FR-type domain; that stretch reads VKKWECTVES…YGPFGEFFAK (140 aa). Positions 272-389 are catalytic; the sequence is EAEMVFIGGG…PMMNAAVIKM (118 aa).

It belongs to the NqrF family. Composed of six subunits; NqrA, NqrB, NqrC, NqrD, NqrE and NqrF. It depends on [2Fe-2S] cluster as a cofactor. FAD serves as cofactor.

Its subcellular location is the cell inner membrane. The enzyme catalyses a ubiquinone + n Na(+)(in) + NADH + H(+) = a ubiquinol + n Na(+)(out) + NAD(+). Its function is as follows. NQR complex catalyzes the reduction of ubiquinone-1 to ubiquinol by two successive reactions, coupled with the transport of Na(+) ions from the cytoplasm to the periplasm. The first step is catalyzed by NqrF, which accepts electrons from NADH and reduces ubiquinone-1 to ubisemiquinone by a one-electron transfer pathway. The polypeptide is Na(+)-translocating NADH-quinone reductase subunit F (Pseudomonas aeruginosa (strain ATCC 15692 / DSM 22644 / CIP 104116 / JCM 14847 / LMG 12228 / 1C / PRS 101 / PAO1)).